A 432-amino-acid chain; its full sequence is 3-chlorobenzoate-3,4-dioxygenase oxygenase subunit (432 aa).

The region spanning 27 to 133 (WIPALKSTEL…VKEMAGVVWV (107 aa)) is the Rieske domain. Residues C69, H71, C88, and H91 each coordinate [2Fe-2S] cluster. Fe cation-binding residues include H180 and H185.

Belongs to the bacterial ring-hydroxylating dioxygenase alpha subunit family. This dioxygenase system consists of two proteins: an oxygenase and an oxygenase reductase. [2Fe-2S] cluster is required as a cofactor. The cofactor is Fe cation.

The sequence is that of 3-chlorobenzoate-3,4-dioxygenase oxygenase subunit (cbaA) from Comamonas testosteroni (Pseudomonas testosteroni).